Reading from the N-terminus, the 425-residue chain is Serine--tRNA ligase (425 aa).

L-serine is bound at residue 228-230 (TAE). 259 to 261 (RSE) is an ATP binding site. Glu-282 contacts L-serine. Residue 346 to 349 (EIAS) coordinates ATP. Ser-382 is an L-serine binding site.

It belongs to the class-II aminoacyl-tRNA synthetase family. Type-1 seryl-tRNA synthetase subfamily. In terms of assembly, homodimer. The tRNA molecule binds across the dimer.

Its subcellular location is the cytoplasm. It catalyses the reaction tRNA(Ser) + L-serine + ATP = L-seryl-tRNA(Ser) + AMP + diphosphate + H(+). The enzyme catalyses tRNA(Sec) + L-serine + ATP = L-seryl-tRNA(Sec) + AMP + diphosphate + H(+). It participates in aminoacyl-tRNA biosynthesis; selenocysteinyl-tRNA(Sec) biosynthesis; L-seryl-tRNA(Sec) from L-serine and tRNA(Sec): step 1/1. Functionally, catalyzes the attachment of serine to tRNA(Ser). Is also able to aminoacylate tRNA(Sec) with serine, to form the misacylated tRNA L-seryl-tRNA(Sec), which will be further converted into selenocysteinyl-tRNA(Sec). This Rickettsia peacockii (strain Rustic) protein is Serine--tRNA ligase.